A 117-amino-acid polypeptide reads, in one-letter code: Large ribosomal subunit protein bL20 (117 aa).

The protein belongs to the bacterial ribosomal protein bL20 family.

Binds directly to 23S ribosomal RNA and is necessary for the in vitro assembly process of the 50S ribosomal subunit. It is not involved in the protein synthesizing functions of that subunit. In Pelotomaculum thermopropionicum (strain DSM 13744 / JCM 10971 / SI), this protein is Large ribosomal subunit protein bL20.